A 90-amino-acid polypeptide reads, in one-letter code: Bombyxin B-3 (90 aa).

The signal sequence occupies residues 1 to 20; it reads MMKTTIMFMLVVVISLTYSS. 3 cysteine pairs are disulfide-bonded: C30–C76, C42–C89, and C75–C80. A propeptide spans 49-67 (c peptide like); the sequence is SGAQYAPYFWTRQYLGSRG.

Belongs to the insulin family. As to quaternary structure, heterodimer of a B chain and an A chain linked by two disulfide bonds.

The protein localises to the secreted. Its function is as follows. Brain peptide responsible for activation of prothoracic glands to produce ecdysone in insects. The protein is Bombyxin B-3 (BBXB3) of Bombyx mori (Silk moth).